The following is a 496-amino-acid chain: Glutelin type-A 3 (496 aa).

The N-terminal stretch at 1-24 is a signal peptide; the sequence is MATIKFPIVFSVVCLFLLCNGSLA. Intrachain disulfides connect C45-C78 and C121-C312. 2 consecutive Cupin type-1 domains span residues 50–248 and 318–467; these read LQAF…GVAR and QNID…EEAR.

Belongs to the 11S seed storage protein (globulins) family. In terms of assembly, hexamer; each subunit is composed of an acidic and a basic chain derived from a single precursor and linked by a disulfide bond.

Its function is as follows. Seed storage protein. This Oryza sativa subsp. japonica (Rice) protein is Glutelin type-A 3 (GLUA3).